Reading from the N-terminus, the 220-residue chain is Putative 3-methyladenine DNA glycosylase (220 aa).

This sequence belongs to the DNA glycosylase MPG family.

In Rickettsia bellii (strain RML369-C), this protein is Putative 3-methyladenine DNA glycosylase.